The chain runs to 442 residues: Citrate transporter CitP (442 aa).

Helical transmembrane passes span 27 to 47, 59 to 79, 83 to 103, 114 to 134, 151 to 171, 177 to 197, 209 to 229, 267 to 287, 293 to 313, 321 to 341, 349 to 369, 387 to 409, and 421 to 441; these read ISGI…IAIS, IFAL…LPIF, LGGG…TNVI, FING…SSLF, VAFI…VIIG, AILY…IVPL, SAGI…LAII, YVQL…GTML, GINA…FGLL, VIMF…AGVG, VLLA…IVAI, AAIT…VLAA, and MGNR…VTFM.

It belongs to the 2-hydroxycarboxylate transporter (2-HCT) (TC 2.A.24) family.

It localises to the cell membrane. The enzyme catalyses (R)-lactate(in) + citrate(out) = (R)-lactate(out) + citrate(in). It carries out the reaction (S)-lactate(in) + citrate(out) = (S)-lactate(out) + citrate(in). It catalyses the reaction citrate(in) + H(+)(in) = citrate(out) + H(+)(out). With respect to regulation, the transport of citrate is unaffected by the presence of citrate in the growth media. Functionally, secondary transporter involved in citrate metabolism. During cometabolism of citrate and glucose, catalyzes the uptake of divalent citrate into the cell coupled to the exit of monovalent lactate, the end product of glycolysis in L.lactis. The citrate/lactate exchange is electrogenic and results in the generation of a membrane potential. Plays an important role in resistance against lactate toxicity at low pH. In the absence of glucose, i.e. when no lactate is produced, CitP catalyzes the uptake of citrate in exchange with the citrate metabolism intermediates pyruvate and alpha-acetolactate, and the end product acetate. In the absence of glucose, CitP can also catalyze the proton-dependent transport of citrate. In vitro, shows a broad substrate specificity. Can transport a wide variety of mono- and dicarboxylates of the form X-CR(2)-COO(-), where X represents OH (2-hydroxy acid), O (2-keto acid), or H (acid) and R groups differ in size, hydrophobicity and composition. Many of the substrates are intermediates or products of amino acid metabolism, suggesting that CitP may have a broader physiological function than its role in citrate metabolism. This chain is Citrate transporter CitP, found in Lactococcus lactis subsp. lactis (Streptococcus lactis).